The sequence spans 87 residues: U3-theraphotoxin-Hhn1a 12 (87 aa).

Residues 1–24 (MVNMKASMFLTFAGLVLLFVVCYA) form the signal peptide. A propeptide spanning residues 25-52 (SESEEKEFPKEMLSSIFAVDKDFKQEER) is cleaved from the precursor. 3 disulfides stabilise this stretch: cysteine 54–cysteine 67, cysteine 61–cysteine 72, and cysteine 66–cysteine 79.

Belongs to the neurotoxin 10 (Hwtx-1) family. 51 (Hntx-8) subfamily. Hntx-8 sub-subfamily. Expressed by the venom gland.

Its subcellular location is the secreted. Functionally, ion channel inhibitor. This chain is U3-theraphotoxin-Hhn1a 12, found in Cyriopagopus hainanus (Chinese bird spider).